We begin with the raw amino-acid sequence, 288 residues long: NAD(P)H-hydrate epimerase (288 aa).

Residues 1–32 constitute a mitochondrion transit peptide; that stretch reads MSGLRALLGLGLLVAGSRLSRVRVQAGSCRAG. A Phosphoserine modification is found at Ser-49. One can recognise a YjeF N-terminal domain in the interval 65–275; that stretch reads AQAVDQELFN…ALEKKYQLNL (211 aa). 119–123 contacts (6S)-NADPHX; that stretch reads NNGGD. Position 120 (Asn-120) interacts with K(+). Lys-144 carries the N6-succinyllysine modification. Asp-185 serves as a coordination point for K(+). Residues 189–195 and Asp-218 each bind (6S)-NADPHX; that span reads GFSFTGE. Ser-221 contacts K(+).

It belongs to the NnrE/AIBP family. In terms of assembly, homodimer. Interacts with APOA1 and APOA2. K(+) is required as a cofactor. Post-translationally, undergoes physiological phosphorylation during sperm capacitation, downstream to PKA activation.

It is found in the mitochondrion. It localises to the secreted. The enzyme catalyses (6R)-NADHX = (6S)-NADHX. It carries out the reaction (6R)-NADPHX = (6S)-NADPHX. Functionally, catalyzes the epimerization of the S- and R-forms of NAD(P)HX, a damaged form of NAD(P)H that is a result of enzymatic or heat-dependent hydration. This is a prerequisite for the S-specific NAD(P)H-hydrate dehydratase to allow the repair of both epimers of NAD(P)HX. Accelerates cholesterol efflux from endothelial cells to high-density lipoprotein (HDL) and thereby regulates angiogenesis. This Bos taurus (Bovine) protein is NAD(P)H-hydrate epimerase.